A 474-amino-acid polypeptide reads, in one-letter code: uncharacterized protein (474 aa).

A run of 10 helical transmembrane segments spans residues 17 to 39 (ILGGIIQIIGIFTLVPCIVSVYY), 44 to 61 (FLNFLIPGLFFSIFGFVL), 81 to 103 (LAWLIASFIGAIPLYLSIDYFSY), 144 to 166 (GVGILVLSALVLARSGTVAYLLY), 186 to 208 (IIWIYILYTILGVLLLYLSGLSF), 239 to 256 (IVMIGIMMVGGVMSFSIH), 268 to 286 (IQTKYALIVTAFISIIISI), 319 to 341 (LSLFLIIFLMLIGGGAGTTTGGV), 385 to 407 (AFVVFFLYCLSSFLTALIFIALG), and 444 to 466 (IIAMWIGRLEIIPVLVLFATLYF).

This sequence belongs to the TrkH potassium transport family.

The protein resides in the cell membrane. This is an uncharacterized protein from Methanocaldococcus jannaschii (strain ATCC 43067 / DSM 2661 / JAL-1 / JCM 10045 / NBRC 100440) (Methanococcus jannaschii).